Here is a 186-residue protein sequence, read N- to C-terminus: Ribosome-recycling factor (186 aa).

It belongs to the RRF family.

It localises to the cytoplasm. In terms of biological role, responsible for the release of ribosomes from messenger RNA at the termination of protein biosynthesis. May increase the efficiency of translation by recycling ribosomes from one round of translation to another. The polypeptide is Ribosome-recycling factor (Rickettsia canadensis (strain McKiel)).